The primary structure comprises 76 residues: Esculentin-2SN1 (76 aa).

The signal sequence occupies residues 1-22 (MFTMKKSLLFLFFLGTISLSLC). The propeptide occupies 23-37 (EQERGADEDDGGEEV). The cysteines at positions 70 and 76 are disulfide-linked.

This sequence belongs to the frog skin active peptide (FSAP) family. Esculentin subfamily. In terms of tissue distribution, expressed by the skin glands.

It is found in the secreted. Its function is as follows. Antimicrobial peptide. Active against some Gram-negative and a variety of Gram-positive bacterial strains. Not active against fungi. Shows very weak hemolytic activity against human erythrocytes. The chain is Esculentin-2SN1 from Sylvirana spinulosa (Fine-spined frog).